Here is a 460-residue protein sequence, read N- to C-terminus: Chromosomal replication initiator protein DnaA (460 aa).

The domain I, interacts with DnaA modulators stretch occupies residues 1–84 (MAVSLWQQCI…RFDIGSRPSA (84 aa)). A domain II region spans residues 84–123 (AKKPEPAPVAAVRVPSPQTKASVGTAFNTTEPVANTNHRS). Residues 124–340 (NINPTYQFDN…GALNRVIANA (217 aa)) are domain III, AAA+ region. Positions 168, 170, 171, and 172 each coordinate ATP. Positions 341-460 (NFTGRPITID…YANLIRTLSS (120 aa)) are domain IV, binds dsDNA.

This sequence belongs to the DnaA family. Oligomerizes as a right-handed, spiral filament on DNA at oriC.

The protein localises to the cytoplasm. In terms of biological role, plays an essential role in the initiation and regulation of chromosomal replication. ATP-DnaA binds to the origin of replication (oriC) to initiate formation of the DNA replication initiation complex once per cell cycle. Binds the DnaA box (a 9 base pair repeat at the origin) and separates the double-stranded (ds)DNA. Forms a right-handed helical filament on oriC DNA; dsDNA binds to the exterior of the filament while single-stranded (ss)DNA is stabiized in the filament's interior. The ATP-DnaA-oriC complex binds and stabilizes one strand of the AT-rich DNA unwinding element (DUE), permitting loading of DNA polymerase. After initiation quickly degrades to an ADP-DnaA complex that is not apt for DNA replication. Binds acidic phospholipids. The sequence is that of Chromosomal replication initiator protein DnaA from Shewanella oneidensis (strain ATCC 700550 / JCM 31522 / CIP 106686 / LMG 19005 / NCIMB 14063 / MR-1).